Reading from the N-terminus, the 245-residue chain is PF03932 family protein CutC (245 aa).

Belongs to the CutC family.

Its subcellular location is the cytoplasm. In Photobacterium profundum (strain SS9), this protein is PF03932 family protein CutC.